The following is a 312-amino-acid chain: Pantothenate kinase (312 aa).

97–104 is a binding site for ATP; it reads GSVAVGKS.

The protein belongs to the prokaryotic pantothenate kinase family.

It localises to the cytoplasm. The catalysed reaction is (R)-pantothenate + ATP = (R)-4'-phosphopantothenate + ADP + H(+). It participates in cofactor biosynthesis; coenzyme A biosynthesis; CoA from (R)-pantothenate: step 1/5. The polypeptide is Pantothenate kinase (Mycobacterium sp. (strain JLS)).